A 387-amino-acid polypeptide reads, in one-letter code: Anhydro-N-acetylmuramic acid kinase (387 aa).

17-24 contributes to the ATP binding site; the sequence is GTSMDGVD.

The protein belongs to the anhydro-N-acetylmuramic acid kinase family.

The enzyme catalyses 1,6-anhydro-N-acetyl-beta-muramate + ATP + H2O = N-acetyl-D-muramate 6-phosphate + ADP + H(+). The protein operates within amino-sugar metabolism; 1,6-anhydro-N-acetylmuramate degradation. Its pathway is cell wall biogenesis; peptidoglycan recycling. Functionally, catalyzes the specific phosphorylation of 1,6-anhydro-N-acetylmuramic acid (anhMurNAc) with the simultaneous cleavage of the 1,6-anhydro ring, generating MurNAc-6-P. Is required for the utilization of anhMurNAc either imported from the medium or derived from its own cell wall murein, and thus plays a role in cell wall recycling. This Burkholderia pseudomallei (strain 1710b) protein is Anhydro-N-acetylmuramic acid kinase.